Here is a 304-residue protein sequence, read N- to C-terminus: tRNA-uridine aminocarboxypropyltransferase 1 (304 aa).

2 disordered regions span residues 1-29 and 165-193; these read MALSPSVVPQESKEDNANCVETKPSQTTS and RNKADNLDVPPRKLKRTTDEEGWDLHEST. Residues 180-193 show a composition bias toward basic and acidic residues; that stretch reads RTTDEEGWDLHEST. Positions 206 to 209 match the DXTW motif; it reads DSTW.

Belongs to the TDD superfamily. DTWD1 family.

It localises to the nucleus. The enzyme catalyses a uridine in tRNA + S-adenosyl-L-methionine = a 3-[(3S)-3-amino-3-carboxypropyl]uridine in tRNA + S-methyl-5'-thioadenosine + H(+). In terms of biological role, catalyzes the formation of 3-(3-amino-3-carboxypropyl)uridine (acp3U) at position 20 in the D-loop of several cytoplasmic tRNAs (acp3U(20)). The chain is tRNA-uridine aminocarboxypropyltransferase 1 from Mus musculus (Mouse).